We begin with the raw amino-acid sequence, 275 residues long: NAD(P)H dehydrogenase [quinone] 1 (275 aa).

FAD is bound by residues H13, 19-20 (FN), and Q68. S83 carries the post-translational modification Phosphoserine. 105-108 (LQWF) serves as a coordination point for FAD. 127 to 129 (AYT) provides a ligand contact to substrate. FAD contacts are provided by residues 149-152 (TTGG), Y157, and R202. Positions 226-275 (PSSLFDLNFQAGFLLKKEIEDEQKNNKYGLSVGHHLGKPIPTDNQIKARK) are important for apoenzyme conformational stability. K252 participates in a covalent cross-link: Glycyl lysine isopeptide (Lys-Gly) (interchain with G-Cter in SUMO2).

Belongs to the NAD(P)H dehydrogenase (quinone) family. As to quaternary structure, homodimer. Interacts with PDLIM4 isoform 2; this interaction stabilizes PDLIM4 isoform 2 in response to oxidative stress and protects it from ubiquitin-independent degradation by the core 20S proteasome. Interacts with TP73 (via SAM domain); this interaction is NADH-dependent, stabilizes TP73 in response to oxidative stress and protects it from ubiquitin-independent degradation by the 20S proteasome. Interacts with TP53; this interaction is NADH-dependent, stabilizes TP53 in response to oxidative stress and protects it from ubiquitin-independent degradation by the 20S proteasome. It depends on FAD as a cofactor.

Its subcellular location is the cytoplasm. It is found in the cytosol. It carries out the reaction a quinone + NADH + H(+) = a quinol + NAD(+). It catalyses the reaction a quinone + NADPH + H(+) = a quinol + NADP(+). The catalysed reaction is ubiquinone-10 + NADH + H(+) = ubiquinol-10 + NAD(+). The enzyme catalyses menadione + NADH + H(+) = menadiol + NAD(+). In terms of biological role, flavin-containing quinone reductase that catalyzes two-electron reduction of quinones to hydroquinones using either NADH or NADPH as electron donors. In a ping-pong kinetic mechanism, the electrons are sequentially transferred from NAD(P)H to flavin cofactor and then from reduced flavin to the quinone, bypassing the formation of semiquinone and reactive oxygen species. Regulates cellular redox state primarily through quinone detoxification. Reduces components of plasma membrane redox system such as coenzyme Q and vitamin quinones, producing antioxidant hydroquinone forms. In the process may function as superoxide scavenger to prevent hydroquinone oxidation and facilitate excretion. Alternatively, can activate quinones and their derivatives by generating redox reactive hydroquinones with DNA cross-linking antitumor potential. Acts as a gatekeeper of the core 20S proteasome known to degrade proteins with unstructured regions. Upon oxidative stress, interacts with tumor suppressors TP53 and TP73 in a NADH-dependent way and inhibits their ubiquitin-independent degradation by the 20S proteasome. This Cavia porcellus (Guinea pig) protein is NAD(P)H dehydrogenase [quinone] 1 (NQO1).